The following is a 153-amino-acid chain: Aspartate carbamoyltransferase regulatory chain (153 aa).

Residues C109, C114, C138, and C141 each contribute to the Zn(2+) site.

It belongs to the PyrI family. In terms of assembly, contains catalytic and regulatory chains. Requires Zn(2+) as cofactor.

In terms of biological role, involved in allosteric regulation of aspartate carbamoyltransferase. The protein is Aspartate carbamoyltransferase regulatory chain of Edwardsiella ictaluri (strain 93-146).